A 124-amino-acid polypeptide reads, in one-letter code: Glutaredoxin-2 (124 aa).

Cys-13 and Cys-16 are oxidised to a cystine.

This sequence belongs to the glutaredoxin family. As to quaternary structure, homodimer.

It localises to the host cytoplasm. In terms of biological role, glutaredoxin necessary for virion morphogenesis and virus replication. Functions as a thiol-disulfide transfer protein between membrane-associated OPG128 and substrates OPG095 or OPG053. The complete pathway for formation of disulfide bonds in intracellular virion membrane proteins sequentially involves oxidation of OPG072, OPG128 and OPG088. Exhibit thioltransferase and dehydroascorbate reductase activities in vitro. This chain is Glutaredoxin-2 (OPG088), found in Mus musculus (Mouse).